Here is an 887-residue protein sequence, read N- to C-terminus: DNA mismatch repair protein MutS (887 aa).

602-609 (GPNMSGKS) lines the ATP pocket.

It belongs to the DNA mismatch repair MutS family.

This protein is involved in the repair of mismatches in DNA. It is possible that it carries out the mismatch recognition step. This protein has a weak ATPase activity. The protein is DNA mismatch repair protein MutS of Staphylococcus saprophyticus subsp. saprophyticus (strain ATCC 15305 / DSM 20229 / NCIMB 8711 / NCTC 7292 / S-41).